Consider the following 457-residue polypeptide: D-xylose transporter (457 aa).

Helical transmembrane passes span 14–34 (ALGG…ILFI), 46–66 (GWVV…IGPS), 81–101 (IIFF…TLII), 104–124 (IILG…LAEL), 131–151 (GTVS…AYIT), 164–184 (WMLG…LILP), 244–264 (LIIG…TVLY), 281–301 (LLAH…AVAI), 309–329 (KIVN…SIGM), and 338–358 (AAII…ATWG). A beta-D-xylose-binding site is contributed by Gln138. Beta-D-xylose contacts are provided by residues 254–255 (QQ) and Asn260. Residues Trp362 and Asn385 each coordinate beta-D-xylose. The next 2 helical transmembrane spans lie at 380–400 (FASV…PSLL) and 402–422 (FFGT…SIWF).

The protein belongs to the major facilitator superfamily. Sugar transporter (TC 2.A.1.1) family.

Its subcellular location is the cell membrane. Its activity is regulated as follows. Transport is inhibited by 6-deoxy-D-glucose. Its function is as follows. Uptake of D-xylose across the boundary membrane with the concomitant transport of protons into the cell (symport system). Transport is driven by the proton motive force generated by either malolactic fermentation or by the metabolism of D-glucose. The sequence is that of D-xylose transporter from Levilactobacillus brevis (Lactobacillus brevis).